The chain runs to 241 residues: Adenosylcobinamide-GDP ribazoletransferase (241 aa).

The next 4 helical transmembrane spans lie at leucine 34 to phenylalanine 54, valine 108 to isoleucine 128, leucine 184 to leucine 206, and phenylalanine 220 to proline 240.

Belongs to the CobS family. The cofactor is Mg(2+).

It is found in the cell membrane. The enzyme catalyses alpha-ribazole + adenosylcob(III)inamide-GDP = adenosylcob(III)alamin + GMP + H(+). It carries out the reaction alpha-ribazole 5'-phosphate + adenosylcob(III)inamide-GDP = adenosylcob(III)alamin 5'-phosphate + GMP + H(+). It participates in cofactor biosynthesis; adenosylcobalamin biosynthesis; adenosylcobalamin from cob(II)yrinate a,c-diamide: step 7/7. Functionally, joins adenosylcobinamide-GDP and alpha-ribazole to generate adenosylcobalamin (Ado-cobalamin). Also synthesizes adenosylcobalamin 5'-phosphate from adenosylcobinamide-GDP and alpha-ribazole 5'-phosphate. This is Adenosylcobinamide-GDP ribazoletransferase from Methanopyrus kandleri (strain AV19 / DSM 6324 / JCM 9639 / NBRC 100938).